The following is a 227-amino-acid chain: Octanoyltransferase (227 aa).

Residues 43–218 enclose the BPL/LPL catalytic domain; it reads ADSQDELWIV…TFTKTLGYQE (176 aa). Substrate contacts are provided by residues 82–89, 149–151, and 162–164; these read RGGQVTYH, SLG, and GLA. Catalysis depends on Cys-180, which acts as the Acyl-thioester intermediate.

The protein belongs to the LipB family.

Its subcellular location is the cytoplasm. It catalyses the reaction octanoyl-[ACP] + L-lysyl-[protein] = N(6)-octanoyl-L-lysyl-[protein] + holo-[ACP] + H(+). The protein operates within protein modification; protein lipoylation via endogenous pathway; protein N(6)-(lipoyl)lysine from octanoyl-[acyl-carrier-protein]: step 1/2. Its function is as follows. Catalyzes the transfer of endogenously produced octanoic acid from octanoyl-acyl-carrier-protein onto the lipoyl domains of lipoate-dependent enzymes. Lipoyl-ACP can also act as a substrate although octanoyl-ACP is likely to be the physiological substrate. The sequence is that of Octanoyltransferase from Shewanella denitrificans (strain OS217 / ATCC BAA-1090 / DSM 15013).